We begin with the raw amino-acid sequence, 188 residues long: Probable thiol:disulfide interchange protein DsbE-2 (188 aa).

Residues 1–11 (MSMLHQQKRKN) are Cytoplasmic-facing. The helical transmembrane segment at 12 to 32 (HFVFLPLVILLAVCALLFIGL) threads the bilayer. The Periplasmic portion of the chain corresponds to 33 to 188 (QQDPQKIASA…KLEAENAKVR (156 aa)). The Thioredoxin domain occupies 42–179 (ALIGKPVPTF…QEMFIPEWQK (138 aa)). Cysteines 82 and 85 form a disulfide.

This sequence belongs to the thioredoxin family. DsbE subfamily.

Its subcellular location is the cell inner membrane. In terms of biological role, could be involved in disulfide bond formation. Could catalyzes a late, reductive step in the assembly of periplasmic NrfA c-type cytochrome, probably the reduction of disulfide bonds of the apocytochrome c to allow covalent linkage with the heme. Possible subunit of a heme lyase. In Pasteurella multocida (strain Pm70), this protein is Probable thiol:disulfide interchange protein DsbE-2 (nrfX).